Here is a 50-residue protein sequence, read N- to C-terminus: Large ribosomal subunit protein bL33 (50 aa).

The protein belongs to the bacterial ribosomal protein bL33 family.

The sequence is that of Large ribosomal subunit protein bL33 from Hydrogenovibrio crunogenus (strain DSM 25203 / XCL-2) (Thiomicrospira crunogena).